We begin with the raw amino-acid sequence, 804 residues long: Cas scaffolding protein family member 4 (804 aa).

Residues 11 to 73 (PKTLLARALY…PANRLQVLRE (63 aa)) form the SH3 domain. A phosphoserine mark is found at serine 200 and serine 297. Disordered stretches follow at residues 369–395 (LERGREAPENSPWISGQTSFLSPDSDR), 607–628 (QRETESYQESSPFDRQPTTEHS), and 642–686 (QQSP…TERK). Over residues 380-390 (PWISGQTSFLS) the composition is skewed to polar residues. Basic and acidic residues predominate over residues 649 to 664 (EKGKPTMEGKSNRNPD).

Belongs to the CAS family. In terms of assembly, interacts (via SH3 domain) with PTK2/FAK1 (via C-terminus). In terms of processing, phosphorylated on tyrosines by SRC.

The protein localises to the cytoplasm. It localises to the cytoskeleton. Its subcellular location is the cell junction. The protein resides in the focal adhesion. Its function is as follows. Docking protein that plays a role in tyrosine kinase-based signaling related to cell adhesion and cell spreading. Regulates PTK2/FAK1 activity, focal adhesion integrity, and cell spreading. This Mus musculus (Mouse) protein is Cas scaffolding protein family member 4.